We begin with the raw amino-acid sequence, 194 residues long: Isopentenyl-diphosphate Delta-isomerase (194 aa).

The Mn(2+) site is built by H27 and H34. One can recognise a Nudix hydrolase domain in the interval 32–166; the sequence is ALHLAFSCHV…PWAFSPWLTL (135 aa). C69 is an active-site residue. Mn(2+) is bound at residue H71. Mg(2+) is bound at residue E89. 2 residues coordinate Mn(2+): E116 and E118. Residue E118 is part of the active site.

It belongs to the IPP isomerase type 1 family. Requires Mg(2+) as cofactor. Mn(2+) is required as a cofactor.

It localises to the cytoplasm. The enzyme catalyses isopentenyl diphosphate = dimethylallyl diphosphate. It participates in isoprenoid biosynthesis; dimethylallyl diphosphate biosynthesis; dimethylallyl diphosphate from isopentenyl diphosphate: step 1/1. Catalyzes the 1,3-allylic rearrangement of the homoallylic substrate isopentenyl (IPP) to its highly electrophilic allylic isomer, dimethylallyl diphosphate (DMAPP). This is Isopentenyl-diphosphate Delta-isomerase from Clavibacter michiganensis subsp. michiganensis (strain NCPPB 382).